We begin with the raw amino-acid sequence, 339 residues long: tRNA N6-adenosine threonylcarbamoyltransferase (339 aa).

Positions 117 and 121 each coordinate Fe cation. Substrate-binding positions include 140-144 (VVSGG), D173, G186, and N279. D307 is a Fe cation binding site.

It belongs to the KAE1 / TsaD family. Fe(2+) is required as a cofactor.

Its subcellular location is the cytoplasm. The catalysed reaction is L-threonylcarbamoyladenylate + adenosine(37) in tRNA = N(6)-L-threonylcarbamoyladenosine(37) in tRNA + AMP + H(+). Required for the formation of a threonylcarbamoyl group on adenosine at position 37 (t(6)A37) in tRNAs that read codons beginning with adenine. Is involved in the transfer of the threonylcarbamoyl moiety of threonylcarbamoyl-AMP (TC-AMP) to the N6 group of A37, together with TsaE and TsaB. TsaD likely plays a direct catalytic role in this reaction. The sequence is that of tRNA N6-adenosine threonylcarbamoyltransferase from Syntrophomonas wolfei subsp. wolfei (strain DSM 2245B / Goettingen).